We begin with the raw amino-acid sequence, 279 residues long: Tryptophan synthase alpha chain (279 aa).

Residues E50 and D61 each act as proton acceptor in the active site.

The protein belongs to the TrpA family. As to quaternary structure, tetramer of two alpha and two beta chains.

It catalyses the reaction (1S,2R)-1-C-(indol-3-yl)glycerol 3-phosphate + L-serine = D-glyceraldehyde 3-phosphate + L-tryptophan + H2O. The protein operates within amino-acid biosynthesis; L-tryptophan biosynthesis; L-tryptophan from chorismate: step 5/5. In terms of biological role, the alpha subunit is responsible for the aldol cleavage of indoleglycerol phosphate to indole and glyceraldehyde 3-phosphate. The polypeptide is Tryptophan synthase alpha chain (Azorhizobium caulinodans (strain ATCC 43989 / DSM 5975 / JCM 20966 / LMG 6465 / NBRC 14845 / NCIMB 13405 / ORS 571)).